Consider the following 247-residue polypeptide: 23S rRNA (guanosine-2'-O-)-methyltransferase RlmB (247 aa).

G197, I217, and L226 together coordinate S-adenosyl-L-methionine.

The protein belongs to the class IV-like SAM-binding methyltransferase superfamily. RNA methyltransferase TrmH family. RlmB subfamily.

The protein localises to the cytoplasm. The enzyme catalyses guanosine(2251) in 23S rRNA + S-adenosyl-L-methionine = 2'-O-methylguanosine(2251) in 23S rRNA + S-adenosyl-L-homocysteine + H(+). In terms of biological role, specifically methylates the ribose of guanosine 2251 in 23S rRNA. In Vibrio cholerae serotype O1 (strain ATCC 39315 / El Tor Inaba N16961), this protein is 23S rRNA (guanosine-2'-O-)-methyltransferase RlmB.